We begin with the raw amino-acid sequence, 233 residues long: MADS-box transcription factor 56 (233 aa).

In terms of domain architecture, MADS-box spans 1–61 (MVRGRTELKR…GRLYEFASAP (61 aa)). Positions 87–177 (IQQVKDDTLG…RGKHRNLEAA (91 aa)) constitute a K-box domain.

It is found in the nucleus. Its function is as follows. Probable transcription factor. This chain is MADS-box transcription factor 56 (MADS56), found in Oryza sativa subsp. indica (Rice).